We begin with the raw amino-acid sequence, 59 residues long: UPF0509 protein YciZ (59 aa).

It belongs to the UPF0509 family.

This Salmonella agona (strain SL483) protein is UPF0509 protein YciZ.